The chain runs to 231 residues: Secreted LysM effector LysM13 (231 aa).

The first 19 residues, 1–19 (MVFLSLKYALSGLAATAAA), serve as a signal peptide directing secretion. N-linked (GlcNAc...) asparagine glycosylation is found at Asn30, Asn34, Asn77, Asn100, Asn130, Asn201, and Asn226. Positions 38–82 (TTYTTTSEDTIFTVARKFDRGPCDIARYNRMIDAEHIFANFTLRI) constitute a LysM domain.

This sequence belongs to the secreted LysM effector family.

The protein localises to the secreted. Functionally, secreted LysM effector that might have a role in sequestration of chitin oligosaccharides (breakdown products of fungal cell walls that are released during invasion and act as triggers of host immunity) to dampen host defense. The protein is Secreted LysM effector LysM13 of Penicillium expansum (Blue mold rot fungus).